A 93-amino-acid chain; its full sequence is Large ribosomal subunit protein uL23cy (93 aa).

It belongs to the universal ribosomal protein uL23 family. Part of the 50S ribosomal subunit.

Its subcellular location is the plastid. It localises to the chloroplast. Its function is as follows. Binds to 23S rRNA. This is Large ribosomal subunit protein uL23cy (rpl23-B) from Agrostis stolonifera (Creeping bentgrass).